A 93-amino-acid chain; its full sequence is Small ribosomal subunit protein uS17 (93 aa).

The protein belongs to the universal ribosomal protein uS17 family. As to quaternary structure, part of the 30S ribosomal subunit.

One of the primary rRNA binding proteins, it binds specifically to the 5'-end of 16S ribosomal RNA. The sequence is that of Small ribosomal subunit protein uS17 from Rhodococcus jostii (strain RHA1).